Here is a 100-residue protein sequence, read N- to C-terminus: Small ribosomal subunit protein uS14 (100 aa).

It belongs to the universal ribosomal protein uS14 family. As to quaternary structure, part of the 30S ribosomal subunit. Contacts proteins S3 and S10.

Binds 16S rRNA, required for the assembly of 30S particles and may also be responsible for determining the conformation of the 16S rRNA at the A site. This chain is Small ribosomal subunit protein uS14, found in Thermosynechococcus vestitus (strain NIES-2133 / IAM M-273 / BP-1).